Here is a 364-residue protein sequence, read N- to C-terminus: Photoreceptor outer segment membrane glycoprotein 2 (364 aa).

The Cytoplasmic portion of the chain corresponds to 1-24 (MTVLKVKFTKTKRDKLAQILWILN). Residues 25–43 (WVSVVSGIILFSLGLFLKI) traverse the membrane as a helical segment. Over 44–61 (EIKKRNEVMAKGDINSVP) the chain is Lumenal. The helical transmembrane segment at 62 to 80 (NMLISVGVIACVVNFLGGK) threads the bilayer. At 81 to 99 (ICYDCSDANKFSRWKLIML) the chain is on the cytoplasmic side. Residues 100 to 123 (PYIICTFCFTFCILLGALMCYTMR) traverse the membrane as a helical segment. Topologically, residues 124-264 (NELEESLYLG…LEYYTAIMRS (141 aa)) are lumenal. Asn-229 carries N-linked (GlcNAc...) asparagine glycosylation. The chain crosses the membrane as a helical span at residues 265-290 (IGIAALLIWLFELSVLIGVRYLQTAM). Over 291–364 (KNVLLQGDLQ…VTAKSIPAAS (74 aa)) the chain is Cytoplasmic.

It belongs to the PRPH2/ROM1 family.

It is found in the membrane. The chain is Photoreceptor outer segment membrane glycoprotein 2 from Gallus gallus (Chicken).